Consider the following 367-residue polypeptide: Beta sliding clamp (367 aa).

Belongs to the beta sliding clamp family. As to quaternary structure, forms a ring-shaped head-to-tail homodimer around DNA which binds and tethers DNA polymerases and other proteins to the DNA. The DNA replisome complex has a single clamp-loading complex (3 tau and 1 each of delta, delta', psi and chi subunits) which binds 3 Pol III cores (1 core on the leading strand and 2 on the lagging strand) each with a beta sliding clamp dimer. Additional proteins in the replisome are other copies of gamma, psi and chi, Ssb, DNA helicase and RNA primase.

It localises to the cytoplasm. Confers DNA tethering and processivity to DNA polymerases and other proteins. Acts as a clamp, forming a ring around DNA (a reaction catalyzed by the clamp-loading complex) which diffuses in an ATP-independent manner freely and bidirectionally along dsDNA. Initially characterized for its ability to contact the catalytic subunit of DNA polymerase III (Pol III), a complex, multichain enzyme responsible for most of the replicative synthesis in bacteria; Pol III exhibits 3'-5' exonuclease proofreading activity. The beta chain is required for initiation of replication as well as for processivity of DNA replication. In Pseudomonas aeruginosa (strain ATCC 15692 / DSM 22644 / CIP 104116 / JCM 14847 / LMG 12228 / 1C / PRS 101 / PAO1), this protein is Beta sliding clamp (dnaN).